Consider the following 57-residue polypeptide: U17-myrmicitoxin-Tb1a (57 aa).

A signal peptide spans 1 to 29 (MEKNRTNIFSVYLMITFLLISIFITMVMS). A propeptide spanning residues 30-33 (DGEA) is cleaved from the precursor. A disulfide bridge links Cys42 with Cys53. Position 56 is an alanine amide (Ala56).

O-glycosylated. In terms of tissue distribution, expressed by the venom gland.

The protein localises to the secreted. Serine protease inhibitor which exhibits antifibrinolytic, antielastolytic and antimicrobial activities. Displays antimicrobial activity against bacteria and fungi. Likely functions in the innate immune response to microbial infection and possibly in the venom, as an antifibrinolytic agent. The protein is U17-myrmicitoxin-Tb1a of Tetramorium bicarinatum (Tramp ant).